We begin with the raw amino-acid sequence, 233 residues long: Hydroxyacylglutathione hydrolase (233 aa).

Zn(2+) contacts are provided by His-52, His-54, Asp-56, His-57, His-108, Asp-125, and His-163.

It belongs to the metallo-beta-lactamase superfamily. Glyoxalase II family. Monomer. It depends on Zn(2+) as a cofactor.

It carries out the reaction an S-(2-hydroxyacyl)glutathione + H2O = a 2-hydroxy carboxylate + glutathione + H(+). It functions in the pathway secondary metabolite metabolism; methylglyoxal degradation; (R)-lactate from methylglyoxal: step 2/2. Its function is as follows. Thiolesterase that catalyzes the hydrolysis of S-D-lactoyl-glutathione to form glutathione and D-lactic acid. This chain is Hydroxyacylglutathione hydrolase, found in Pasteurella multocida (strain Pm70).